A 445-amino-acid polypeptide reads, in one-letter code: V-type proton ATPase subunit H (445 aa).

Belongs to the V-ATPase H subunit family. V-ATPase is a heteromultimeric enzyme composed of a peripheral catalytic V1 complex (components A to H) attached to an integral membrane V0 proton pore complex (components: a, c, c', c'' and d).

Functionally, subunit of the peripheral V1 complex of vacuolar ATPase. Subunit H activates the ATPase activity of the enzyme and couples ATPase activity to proton flow. Vacuolar ATPase is responsible for acidifying a variety of intracellular compartments in eukaryotic cells, thus providing most of the energy required for transport processes in the vacuolar system. This is V-type proton ATPase subunit H (vatH) from Dictyostelium discoideum (Social amoeba).